The primary structure comprises 231 residues: 5'-methylthioadenosine/S-adenosylhomocysteine nucleosidase (231 aa).

Residue Glu-12 is the Proton acceptor of the active site. Residues Gly-78, Ile-153, and Met-174–Glu-175 each bind substrate. Catalysis depends on Asp-198, which acts as the Proton donor.

Belongs to the PNP/UDP phosphorylase family. MtnN subfamily.

The enzyme catalyses S-adenosyl-L-homocysteine + H2O = S-(5-deoxy-D-ribos-5-yl)-L-homocysteine + adenine. It carries out the reaction S-methyl-5'-thioadenosine + H2O = 5-(methylsulfanyl)-D-ribose + adenine. It catalyses the reaction 5'-deoxyadenosine + H2O = 5-deoxy-D-ribose + adenine. It functions in the pathway amino-acid biosynthesis; L-methionine biosynthesis via salvage pathway; S-methyl-5-thio-alpha-D-ribose 1-phosphate from S-methyl-5'-thioadenosine (hydrolase route): step 1/2. Catalyzes the irreversible cleavage of the glycosidic bond in both 5'-methylthioadenosine (MTA) and S-adenosylhomocysteine (SAH/AdoHcy) to adenine and the corresponding thioribose, 5'-methylthioribose and S-ribosylhomocysteine, respectively. Also cleaves 5'-deoxyadenosine, a toxic by-product of radical S-adenosylmethionine (SAM) enzymes, into 5-deoxyribose and adenine. This is 5'-methylthioadenosine/S-adenosylhomocysteine nucleosidase from Maridesulfovibrio salexigens (strain ATCC 14822 / DSM 2638 / NCIMB 8403 / VKM B-1763) (Desulfovibrio salexigens).